We begin with the raw amino-acid sequence, 264 residues long: 3-methyl-2-oxobutanoate hydroxymethyltransferase (264 aa).

The Mg(2+) site is built by Asp45 and Asp84. 3-methyl-2-oxobutanoate is bound by residues 45–46 (DS), Asp84, and Lys112. Mg(2+) is bound at residue Glu114. Glu181 serves as the catalytic Proton acceptor.

It belongs to the PanB family. Homodecamer; pentamer of dimers. Mg(2+) serves as cofactor.

Its subcellular location is the cytoplasm. It catalyses the reaction 3-methyl-2-oxobutanoate + (6R)-5,10-methylene-5,6,7,8-tetrahydrofolate + H2O = 2-dehydropantoate + (6S)-5,6,7,8-tetrahydrofolate. Its pathway is cofactor biosynthesis; (R)-pantothenate biosynthesis; (R)-pantoate from 3-methyl-2-oxobutanoate: step 1/2. Catalyzes the reversible reaction in which hydroxymethyl group from 5,10-methylenetetrahydrofolate is transferred onto alpha-ketoisovalerate to form ketopantoate. The polypeptide is 3-methyl-2-oxobutanoate hydroxymethyltransferase (Shewanella frigidimarina (strain NCIMB 400)).